The primary structure comprises 147 residues: Hemoglobin subunit epsilon (147 aa).

In terms of domain architecture, Globin spans 3-147 (HFTAEEKSTI…VATALAHKYH (145 aa)). A phosphoserine mark is found at S14 and S51. Residues H64 and H93 each coordinate heme b.

Belongs to the globin family. Heterotetramer of two alpha chains and two epsilon chains in early embryonic hemoglobin Gower-2; two zeta chains and two epsilon chains in early embryonic hemoglobin Gower-1. In terms of tissue distribution, red blood cells.

In terms of biological role, the epsilon chain is a beta-type chain of early mammalian embryonic hemoglobin. The chain is Hemoglobin subunit epsilon (HBE1) from Cheirogaleus medius (Fat-tailed dwarf lemur).